The primary structure comprises 654 residues: Carboxypeptidase Z (654 aa).

Residues 1-20 (MPTMPLLLAALAALAVLALA) form the signal peptide. The FZ domain maps to 43-165 (THSATCVDLH…APEEEGCYDP (123 aa)). Intrachain disulfides connect C48/C114, C56/C107, C98/C134, C123/C162, and C127/C151. The N-linked (GlcNAc...) asparagine glycan is linked to N62. One can recognise a Peptidase M14 domain in the interval 191 to 507 (AHHSYAQMVR…EPLLNFLEMV (317 aa)). H253 and E256 together coordinate Zn(2+). A glycan (N-linked (GlcNAc...) asparagine) is linked at N286. H385 is a Zn(2+) binding site. The active-site Proton donor/acceptor is the E477. Residues 596–630 (FLPGPSRALPRFQDPQREPTQMDFEPPRARRQPAS) form a disordered region.

This sequence belongs to the peptidase M14 family. Requires Zn(2+) as cofactor.

It localises to the secreted. The protein resides in the extracellular space. It is found in the extracellular matrix. Its activity is regulated as follows. Inhibited by 2-mercaptomethyl-3-guanidinoethylthiopropanoic acid (MGTA) and guanidinoethylmercaptosuccinic acid (GEMSA). Inhibited by chelating agents such as EDTA and EGTA. Its function is as follows. Cleaves substrates with C-terminal arginine residues. Probably modulates the Wnt signaling pathway, by cleaving some undefined protein. May play a role in cleavage during prohormone processing. This Mus musculus (Mouse) protein is Carboxypeptidase Z (Cpz).